We begin with the raw amino-acid sequence, 360 residues long: Phenylalanine--tRNA ligase alpha subunit (360 aa).

Glutamate 260 lines the Mg(2+) pocket.

Belongs to the class-II aminoacyl-tRNA synthetase family. Phe-tRNA synthetase alpha subunit type 1 subfamily. Tetramer of two alpha and two beta subunits. Mg(2+) serves as cofactor.

It localises to the cytoplasm. The catalysed reaction is tRNA(Phe) + L-phenylalanine + ATP = L-phenylalanyl-tRNA(Phe) + AMP + diphosphate + H(+). This chain is Phenylalanine--tRNA ligase alpha subunit, found in Cereibacter sphaeroides (strain ATCC 17029 / ATH 2.4.9) (Rhodobacter sphaeroides).